A 479-amino-acid chain; its full sequence is 3-isopropylmalate dehydratase large subunit (479 aa).

Residues C353, C414, and C417 each coordinate [4Fe-4S] cluster.

This sequence belongs to the aconitase/IPM isomerase family. LeuC type 1 subfamily. As to quaternary structure, heterodimer of LeuC and LeuD. [4Fe-4S] cluster serves as cofactor.

The catalysed reaction is (2R,3S)-3-isopropylmalate = (2S)-2-isopropylmalate. Its pathway is amino-acid biosynthesis; L-leucine biosynthesis; L-leucine from 3-methyl-2-oxobutanoate: step 2/4. Catalyzes the isomerization between 2-isopropylmalate and 3-isopropylmalate, via the formation of 2-isopropylmaleate. This Xanthomonas campestris pv. campestris (strain 8004) protein is 3-isopropylmalate dehydratase large subunit.